Consider the following 291-residue polypeptide: Quinol oxidase subunit 2 (291 aa).

An N-terminal signal peptide occupies residues 1 to 28; sequence MQLKKAFWKLASLLPLSLLLFLGGCDKK. Transmembrane regions (helical) follow at residues 49 to 69 and 91 to 111; these read SFLLMSLIIAIVFILFTVILI and LEIIWTLVPVIIVIALSIPTV.

Belongs to the cytochrome c oxidase subunit 2 family.

It localises to the cell membrane. The enzyme catalyses 2 a quinol + O2 = 2 a quinone + 2 H2O. Catalyzes quinol oxidation with the concomitant reduction of oxygen to water. Subunit II transfers the electrons from a quinol to the binuclear center of the catalytic subunit I. This Bacillus anthracis protein is Quinol oxidase subunit 2.